The primary structure comprises 89 residues: Putative sodium channel toxin Ts30 (89 aa).

An N-terminal signal peptide occupies residues 1–17 (MFKLAIILALLFFGARA). In terms of domain architecture, LCN-type CS-alpha/beta spans 21–85 (RDGYPILSDG…FGDSGTPECH (65 aa)). Disulfide bonds link Cys31–Cys84, Cys35–Cys59, Cys44–Cys64, and Cys48–Cys66.

Expressed by the venom gland.

It localises to the secreted. This is Putative sodium channel toxin Ts30 from Tityus serrulatus (Brazilian scorpion).